A 253-amino-acid chain; its full sequence is 5'-nucleotidase SurE (253 aa).

4 residues coordinate a divalent metal cation: Asp-8, Asp-9, Ser-39, and Asn-92.

It belongs to the SurE nucleotidase family. The cofactor is a divalent metal cation.

It is found in the cytoplasm. The catalysed reaction is a ribonucleoside 5'-phosphate + H2O = a ribonucleoside + phosphate. Functionally, nucleotidase that shows phosphatase activity on nucleoside 5'-monophosphates. The polypeptide is 5'-nucleotidase SurE (Burkholderia thailandensis (strain ATCC 700388 / DSM 13276 / CCUG 48851 / CIP 106301 / E264)).